Consider the following 436-residue polypeptide: Drebrin-like protein (436 aa).

One can recognise an ADF-H domain in the interval 2–133 (AVNLSRNGPA…EPECIMEKVA (132 aa)). Phosphothreonine is present on Thr-26. Ser-160 is modified (phosphoserine). An N6-acetyllysine modification is found at Lys-176. A coiled-coil region spans residues 178-232 (NFWAKAEKEEENRRLEEKRRAEEEKQRLEEERRERELQEAARREQRYQEQHRSAG). 2 stretches are compositionally biased toward basic and acidic residues: residues 185–229 (KEEE…EQHR) and 264–275 (HPREIFKQKERA). The disordered stretch occupies residues 185 to 371 (KEEENRRLEE…GSGHIDNYMQ (187 aa)). The span at 276–286 (MSTTSVSSSQP) shows a compositional bias: polar residues. 4 positions are modified to phosphoserine: Ser-277, Ser-280, Ser-283, and Ser-291. Lys-296 is modified (N6-acetyllysine). Thr-299 carries the phosphothreonine modification. A Phosphoserine modification is found at Ser-311. A phosphotyrosine mark is found at Tyr-340 and Tyr-350. Residues 377-436 (GQGLCARALYDYQAADDTEISFDPENLITGIEVIDEGWWRGYGPDGHFGMFPANYVELIE) form the SH3 domain.

Belongs to the ABP1 family. Interacts with FGD1, MAP4K1 and PRAM1. Interacts with ANKRD54. Interacts with WASL and WIPF1. Interacts with SHANK2 and SHANK3. Interacts with both COBL and PACSIN1. Interacts with DNM1 and SYN1. In terms of tissue distribution, detected in brain (at protein level). Widely expressed in brain with highest levels in hippocampus and cerebral cortex. Located primarily in dendrites and, in moderate amounts, in cell bodies. Isoform 1 and isoform 3 are the predominant isoforms in brain.

The protein resides in the cytoplasm. It localises to the cytoskeleton. Its subcellular location is the cell projection. It is found in the lamellipodium. The protein localises to the ruffle. The protein resides in the cell cortex. It localises to the cytosol. Its subcellular location is the cell membrane. It is found in the synapse. The protein localises to the perikaryon. The protein resides in the neuron projection. It localises to the dendrite. Its subcellular location is the postsynaptic density. It is found in the golgi apparatus membrane. The protein localises to the cytoplasmic vesicle. The protein resides in the clathrin-coated vesicle membrane. It localises to the podosome. Its subcellular location is the early endosome. Adapter protein that binds F-actin and DNM1, and thereby plays a role in receptor-mediated endocytosis. Required for the formation of organized podosome rosettes. May act as a common effector of antigen receptor-signaling pathways in leukocytes. Acts as a key component of the immunological synapse that regulates T-cell activation by bridging TCRs and the actin cytoskeleton to gene activation and endocytic processes. Plays a role in the reorganization of the actin cytoskeleton, formation of cell projections, such as neurites, in neuron morphogenesis and synapse formation via its interaction with WASL and COBL. Does not bind G-actin and promote actin polymerization by itself. This Rattus norvegicus (Rat) protein is Drebrin-like protein.